Here is a 291-residue protein sequence, read N- to C-terminus: Ribose-phosphate pyrophosphokinase (291 aa).

Residues 34 to 36 and 93 to 94 contribute to the ATP site; these read DGE and RQ. Mg(2+) is bound by residues His-127 and Asp-165. Lys-188 is a catalytic residue. D-ribose 5-phosphate is bound by residues Arg-190, Asp-216, and 220–224; that span reads STGGT.

It belongs to the ribose-phosphate pyrophosphokinase family. Class III (archaeal) subfamily. The cofactor is Mg(2+).

The protein resides in the cytoplasm. It carries out the reaction D-ribose 5-phosphate + ATP = 5-phospho-alpha-D-ribose 1-diphosphate + AMP + H(+). Its pathway is metabolic intermediate biosynthesis; 5-phospho-alpha-D-ribose 1-diphosphate biosynthesis; 5-phospho-alpha-D-ribose 1-diphosphate from D-ribose 5-phosphate (route I): step 1/1. In terms of biological role, involved in the biosynthesis of the central metabolite phospho-alpha-D-ribosyl-1-pyrophosphate (PRPP) via the transfer of pyrophosphoryl group from ATP to 1-hydroxyl of ribose-5-phosphate (Rib-5-P). This Sulfolobus acidocaldarius (strain ATCC 33909 / DSM 639 / JCM 8929 / NBRC 15157 / NCIMB 11770) protein is Ribose-phosphate pyrophosphokinase.